Consider the following 380-residue polypeptide: Endo-chitosanase C (380 aa).

The first 22 residues, 1–22 (MPIKSFASRLALSLAICGTAMG), serve as a signal peptide directing secretion. The stretch at 276-304 (CSWPGHCAGATCSSNDDCSDDLTCQNGKC) is one R3-1 repeat. The stretch at 311–341 (ETCSWEGHCKGATCSSNDDCSDELACISGIC) is one R3-2 repeat. One copy of the R3-3 repeat lies at 348–378 (ETCEWEGHCEGASCSSHDDCDGNLACKNGKC).

The protein belongs to the glycosyl hydrolase 75 family.

The protein localises to the secreted. It catalyses the reaction Endohydrolysis of beta-(1-&gt;4)-linkages between D-glucosamine residues in a partly acetylated chitosan.. Functionally, chitosanase catalyzing the endo-type cleavage of chitosan, the deacylated form of chitin. Chitosanase may be crucial in the degradation of the deacetylated portion of chitin in the fungal cell wall. Chitoolisaccharides produced by the hydrolysis of partially N-acetylated chitosan are known to have many biological activities, including antibacterial activity, immune-enhancing effects, and elicitor activity. The sequence is that of Endo-chitosanase C (csnC) from Aspergillus oryzae (Yellow koji mold).